A 331-amino-acid polypeptide reads, in one-letter code: MNNILNRIYNGYNLTEIESYNLFQYIMSGKINNVQLSAILIALKIKGESEQEIMGAMQACLEQAQPFPKQNYMFSDIVGTGGDLSNSINISTASALVGATCGLKIIKHCNSSISGKSGSYDLLKEFDININISQKKSQEMLNKLNVCFLFAPQYHASFKHVSLVRKILKTRTLFNILGPLLNPSNPPLSVIGVYSTKLMIPIAHILKKLNRHRSIIVYSNNIDEVTLHSPTNITELKNSKITSYTLYPESFGVHFHDKNTILGGTPKENYEIVKKVFQGKGPISITETIAANTAILLQLFGNEDLKKNTQYALKIIYSGKVYQKIIELSKF.

5-phospho-alpha-D-ribose 1-diphosphate is bound by residues Gly-79, 82 to 83, Ser-87, 89 to 92, 107 to 115, and Ser-119; these read GD, NIST, and KHCNSSISG. Gly-79 lines the anthranilate pocket. Ser-91 provides a ligand contact to Mg(2+). Position 110 (Asn-110) interacts with anthranilate. Arg-165 is an anthranilate binding site. Asp-223 and Glu-224 together coordinate Mg(2+).

The protein belongs to the anthranilate phosphoribosyltransferase family. As to quaternary structure, homodimer. Mg(2+) is required as a cofactor.

It carries out the reaction N-(5-phospho-beta-D-ribosyl)anthranilate + diphosphate = 5-phospho-alpha-D-ribose 1-diphosphate + anthranilate. Its pathway is amino-acid biosynthesis; L-tryptophan biosynthesis; L-tryptophan from chorismate: step 2/5. In terms of biological role, catalyzes the transfer of the phosphoribosyl group of 5-phosphorylribose-1-pyrophosphate (PRPP) to anthranilate to yield N-(5'-phosphoribosyl)-anthranilate (PRA). The chain is Anthranilate phosphoribosyltransferase from Buchnera aphidicola subsp. Melaphis rhois.